A 563-amino-acid chain; its full sequence is DEAD-box ATP-dependent RNA helicase 25 (563 aa).

Positions 21-57 (KKLTSDEDGSGKLVKDNNKSLKRGREGKSDVDEPLIK) are disordered. The span at 23-56 (LTSDEDGSGKLVKDNNKSLKRGREGKSDVDEPLI) shows a compositional bias: basic and acidic residues. Residue serine 25 is modified to Phosphoserine. Positions 80–108 (TRFDQFPLSPLTLKGIEDAGFKTMTVVQE) match the Q motif motif. In terms of domain architecture, Helicase ATP-binding spans 111 to 294 (LPLILQGKDI…HVALKRDHEF (184 aa)). An ATP-binding site is contributed by 124–131 (AKTGTGKT). Residues 242 to 245 (DEAD) carry the DEAD box motif. Residues 328-479 (LLKKHITDNV…AVKKVQKGLI (152 aa)) form the Helicase C-terminal domain.

Belongs to the DEAD box helicase family.

It catalyses the reaction ATP + H2O = ADP + phosphate + H(+). This is DEAD-box ATP-dependent RNA helicase 25 (RH25) from Arabidopsis thaliana (Mouse-ear cress).